Reading from the N-terminus, the 311-residue chain is Olfactory receptor 5AN1 (311 aa).

Topologically, residues 1–26 (MTGGGNITEITYFILLGFSDFPRIIK) are extracellular. A glycan (N-linked (GlcNAc...) asparagine) is linked at Asn6. The chain crosses the membrane as a helical span at residues 27 to 47 (VLFTIFLVIYITSLAWNLSLI). The Cytoplasmic portion of the chain corresponds to 48–55 (VLIRMDSH). Residues 56-76 (LHTPMYFFLSNLSFIDVCYIS) form a helical membrane-spanning segment. Residues 77-100 (STVPKMLSNLLQEQQTITFVGCII) are Extracellular-facing. Cys98 and Cys190 form a disulfide bridge. Residues 101–121 (QYFIFSTMGLSESCLMTAMAY) traverse the membrane as a helical segment. Topologically, residues 122–134 (DRYAAICNPLLYS) are cytoplasmic. A helical transmembrane segment spans residues 135–155 (SIMSPTLCVWMVLGAYMTGLT). Over 156–197 (ASLFQIGALLQLHFCGSNVIRHFFCDMPQLLILSCTDTFFVQ) the chain is Extracellular. Residues 198-218 (VMTAILTMFFGIASALVIMIS) traverse the membrane as a helical segment. Topologically, residues 219-238 (YGYIGISIMKITSAKGRSKA) are cytoplasmic. A helical membrane pass occupies residues 239–259 (FNTCASHLTAVSLFYTSGIFV). The Extracellular segment spans residues 260 to 272 (YLSSSSGGSSSFD). The helical transmembrane segment at 273-293 (RFASVFYTVVIPMLNPLIYSL) threads the bilayer. Residues 294-311 (RNKEIKDALKRLQKRKCC) lie on the Cytoplasmic side of the membrane.

The protein belongs to the G-protein coupled receptor 1 family.

It localises to the cell membrane. Odorant receptor for musk, which specifically recognizes muscone, musk xylol, and musk ketone. Ligand-binding causes a conformation change that triggers signaling via G(s)-class of G alpha protein GNAL, activating adenylyl cyclase. This is Olfactory receptor 5AN1 from Homo sapiens (Human).